Reading from the N-terminus, the 100-residue chain is Large ribosomal subunit protein uL23 (100 aa).

This sequence belongs to the universal ribosomal protein uL23 family. As to quaternary structure, part of the 50S ribosomal subunit. Contacts protein L29, and trigger factor when it is bound to the ribosome.

One of the early assembly proteins it binds 23S rRNA. One of the proteins that surrounds the polypeptide exit tunnel on the outside of the ribosome. Forms the main docking site for trigger factor binding to the ribosome. This chain is Large ribosomal subunit protein uL23, found in Xylella fastidiosa (strain 9a5c).